Consider the following 113-residue polypeptide: Large ribosomal subunit protein P1 (113 aa).

Positions 84 to 113 (APAAAAKKETKKEEVKKEESDDDMGMGLFD) are disordered. Positions 89 to 102 (AKKETKKEEVKKEE) are enriched in basic and acidic residues.

Belongs to the eukaryotic ribosomal protein P1/P2 family. As to quaternary structure, P1 and P2 exist as dimers at the large ribosomal subunit.

Plays an important role in the elongation step of protein synthesis. This Dictyostelium discoideum (Social amoeba) protein is Large ribosomal subunit protein P1 (rplp1).